A 242-amino-acid chain; its full sequence is Small ribosomal subunit protein uS2 (242 aa).

This sequence belongs to the universal ribosomal protein uS2 family.

The sequence is that of Small ribosomal subunit protein uS2 from Photobacterium profundum (strain SS9).